The following is a 347-amino-acid chain: Protein pelota homolog (347 aa).

Belongs to the eukaryotic release factor 1 family. Pelota subfamily. In terms of assembly, monomer. A divalent metal cation serves as cofactor.

It localises to the cytoplasm. In terms of biological role, may function in recognizing stalled ribosomes, interact with stem-loop structures in stalled mRNA molecules, and effect endonucleolytic cleavage of the mRNA. May play a role in the release non-functional ribosomes and degradation of damaged mRNAs. Has endoribonuclease activity. The sequence is that of Protein pelota homolog from Methanocaldococcus jannaschii (strain ATCC 43067 / DSM 2661 / JAL-1 / JCM 10045 / NBRC 100440) (Methanococcus jannaschii).